The primary structure comprises 775 residues: ADP-ribosylation factor GTPase-activating protein AGD4 (775 aa).

The region spanning 2–226 (ATFINLEDSP…IHQILTYAQQ (225 aa)) is the BAR domain. A PH domain is found at 288-421 (EVIKQGYLLK…WVNKITKAIG (134 aa)). The Arf-GAP domain maps to 467–603 (DDVSTILRGL…ALVIKDESEA (137 aa)). The segment at 482 to 505 (CAECNAPEPDWASLNLGVLLCIQC) adopts a C4-type zinc-finger fold. 2 ANK repeats span residues 682-711 (QGCS…DLNI) and 715-744 (HGRT…RPSI).

In terms of tissue distribution, expressed in roots, hypocotyls, cotyledons, leaf and shoot apical meristems and siliques.

Probable GTPase-activating protein. The polypeptide is ADP-ribosylation factor GTPase-activating protein AGD4 (AGD4) (Arabidopsis thaliana (Mouse-ear cress)).